A 929-amino-acid polypeptide reads, in one-letter code: Diacylglycerol kinase zeta (929 aa).

Over residues 1-14 (MEPRDPSPEARSSD) the composition is skewed to basic and acidic residues. 2 disordered regions span residues 1–46 (MEPR…RRFP) and 59–80 (KSGLQHLAPPPPTPGAPCGESE). Residues 15 to 24 (SESASASSSG) are compositionally biased toward low complexity. A compositionally biased stretch (basic and acidic residues) spans 25–37 (SERDADPEPDKAP). Phorbol-ester/DAG-type zinc fingers lie at residues 98 to 153 (HIWF…NFRC) and 173 to 231 (HHWV…EEPC). A disordered region spans residues 257–281 (KASKKKKRASFKRRSSKKGPEEGRW). Positions 258–273 (ASKKKKRASFKRRSSK) are enriched in basic residues. The segment at 279 to 417 (GRWRPFIIRP…HVEEGNVVQL (139 aa)) is mediates interaction with RASGRP1. In terms of domain architecture, DAGKc spans 292-426 (PLMKPLLVFV…LDRWDLRAEP (135 aa)). A Nuclear export signal motif is present at residues 362–370 (LSTLDQLRL). The segment at 421-441 (DLRAEPNPEAGPEERDDGATD) is disordered. Ser706 bears the Phosphoserine mark. The disordered stretch occupies residues 760-783 (ARPDLPTPTSPLPASPCSPTPGSL). Residues 764 to 778 (LPTPTSPLPASPCSP) show a composition bias toward pro residues. Residue Ser782 is modified to Phosphoserine. 2 ANK repeats span residues 823–853 (QSRTLLHHAVSTGSKEVVRYLLDHAPPEILD) and 858–887 (NGETCLHQAAALGQRTICHYIVEAGASLMK). A PDZ-binding motif is present at residues 925–929 (QETAV).

Belongs to the eukaryotic diacylglycerol kinase family. Interacts (via PDZ-binding motif) with the PDZ domain of the syntrophin SNTG1 and that of SNX27. Interacts with IRS1 in the absence of insulin; insulin stimulation decreases this interaction. Found in a ternary complex with IRS1 and PIP5K1A in the absence of insulin. Interacts with PIP5K1A. Forms a signaling complex with RASGRP1 and HRAS.

It is found in the nucleus. The protein localises to the cytoplasm. It localises to the cytosol. The protein resides in the cell membrane. Its subcellular location is the cell projection. It is found in the lamellipodium. The enzyme catalyses a 1,2-diacyl-sn-glycerol + ATP = a 1,2-diacyl-sn-glycero-3-phosphate + ADP + H(+). It carries out the reaction a 1-O-alkyl-sn-glycerol + ATP = a 1-O-alkyl-sn-glycero-3-phosphate + ADP + H(+). The catalysed reaction is 1-O-alkyl-2-acyl-sn-glycerol + ATP = 1-O-alkyl-2-acyl-sn-glycero-3-phosphate + ADP + H(+). It catalyses the reaction 1,2-didecanoyl-sn-glycerol + ATP = 1,2-didecanoyl-sn-glycero-3-phosphate + ADP + H(+). The enzyme catalyses 1,2-ditetradecanoyl-sn-glycerol + ATP = 1,2-ditetradecanoyl-sn-glycero-3-phosphate + ADP + H(+). It carries out the reaction 1-hexadecanoyl-2-(9Z-octadecenoyl)-sn-glycerol + ATP = 1-hexadecanoyl-2-(9Z-octadecenoyl)-sn-glycero-3-phosphate + ADP + H(+). The catalysed reaction is 1-hexadecanoyl-2-(5Z,8Z,11Z,14Z-eicosatetraenoyl)-sn-glycerol + ATP = 1-hexadecanoyl-2-(5Z,8Z,11Z,14Z-eicosatetraenoyl)-sn-glycero-3-phosphate + ADP + H(+). It catalyses the reaction 1-octadecanoyl-2-(9Z-octadecenoyl)-sn-glycerol + ATP = 1-octadecanoyl-2-(9Z-octadecenoyl)-sn-glycero-3-phosphate + ADP + H(+). The enzyme catalyses 1-octadecanoyl-2-(5Z,8Z,11Z,14Z-eicosatetraenoyl)-sn-glycerol + ATP = 1-octadecanoyl-2-(5Z,8Z,11Z,14Z-eicosatetraenoyl)-sn-glycero-3-phosphate + ADP + H(+). It carries out the reaction 1-octadecanoyl-2-(4Z,7Z,10Z,13Z,16Z,19Z-docosahexaenoyl)-sn-glycerol + ATP = 1-octadecanoyl-2-(4Z,7Z,10Z,13Z,16Z,19Z-docosahexaenoyl)-sn-glycero-3-phosphate + ADP + H(+). The catalysed reaction is 1,2-di-(9Z-octadecenoyl)-sn-glycerol + ATP = 1,2-di-(9Z-octadecenoyl)-sn-glycero-3-phosphate + ADP + H(+). It catalyses the reaction 1-(9Z-octadecenoyl)-2-hexadecanoyl-sn-glycerol + ATP = 1-(9Z)-octadecenoyl-2-hexadecanoyl-sn-glycero-3-phosphate + ADP + H(+). The enzyme catalyses 1-eicosanoyl-2-(5Z,8Z,11Z,14Z)-eicosatetraenoyl-sn-glycerol + ATP = 1-eicosanoyl-2-(5Z,8Z,11Z,14Z)-eicosatetraenoyl-sn-glycero-3-phosphate + ADP + H(+). It carries out the reaction 1,2-di-(5Z,8Z,11Z,14Z)-eicosatetraenoyl-sn-glycerol + ATP = 1,2-di-(5Z,8Z,11Z,14Z)-eicosatetraenoyl-sn-glycero-3-phosphate + ADP + H(+). The catalysed reaction is 1-O-hexadecyl-2-acetyl-sn-glycerol + ATP = 1-O-hexadecyl-2-acetyl-sn-glycero-3-phosphate + ADP + H(+). It catalyses the reaction 1-O-hexadecyl-2-(5Z,8Z,11Z,14Z-eicosatetraenoyl)-sn-glycerol + ATP = 1-O-hexadecyl-2-(5Z,8Z,11Z,14Z-eicosatetraenoyl)-sn-glycero-3-phosphate + ADP + H(+). The enzyme catalyses 1-O-hexadecyl-2-(9Z-octadecenoyl)-sn-glycerol + ATP = 1-O-hexadecyl-2-(9Z-octadecenoyl)-sn-glycero-3-phosphate + ADP + H(+). It carries out the reaction 1-O-hexadecyl-sn-glycerol + ATP = 1-O-hexadecyl-sn-glycero-3-phosphate + ADP + H(+). Its pathway is lipid metabolism; glycerolipid metabolism. Diacylglycerol kinase that converts diacylglycerol/DAG into phosphatidic acid/phosphatidate/PA and regulates the respective levels of these two bioactive lipids. Thereby, acts as a central switch between the signaling pathways activated by these second messengers with different cellular targets and opposite effects in numerous biological processes. Also plays an important role in the biosynthesis of complex lipids. Does not exhibit an acyl chain-dependent substrate specificity among diacylglycerol species. Can also phosphorylate 1-alkyl-2-acylglycerol in vitro but less efficiently and with a preference for alkylacylglycerols containing an arachidonoyl group. The biological processes it is involved in include T cell activation since it negatively regulates T-cell receptor signaling which is in part mediated by diacylglycerol. By generating phosphatidic acid, stimulates PIP5KIA activity which regulates actin polymerization. Through the same mechanism could also positively regulate insulin-induced translocation of SLC2A4 to the cell membrane. Regulates RASGRP1 activity. This is Diacylglycerol kinase zeta from Rattus norvegicus (Rat).